We begin with the raw amino-acid sequence, 294 residues long: Shikimate dehydrogenase (NADP(+)) (294 aa).

Residues 22–24 (SLS) and S69 each bind shikimate. The active-site Proton acceptor is the K73. Residues N94 and D111 each coordinate shikimate. NADP(+) is bound by residues 135–139 (GAGGA) and L236. Y238 contacts shikimate. Position 260 (G260) interacts with NADP(+).

The protein belongs to the shikimate dehydrogenase family. In terms of assembly, homodimer.

The catalysed reaction is shikimate + NADP(+) = 3-dehydroshikimate + NADPH + H(+). It functions in the pathway metabolic intermediate biosynthesis; chorismate biosynthesis; chorismate from D-erythrose 4-phosphate and phosphoenolpyruvate: step 4/7. Involved in the biosynthesis of the chorismate, which leads to the biosynthesis of aromatic amino acids. Catalyzes the reversible NADPH linked reduction of 3-dehydroshikimate (DHSA) to yield shikimate (SA). This chain is Shikimate dehydrogenase (NADP(+)), found in Streptococcus equi subsp. zooepidemicus (strain H70).